The chain runs to 888 residues: Interference hedgehog (888 aa).

The first 24 residues, 1–24 (MSLTRFSLCLLLTLLLAAIPVYLA), serve as a signal peptide directing secretion. Residues 25 to 688 (SPDPGVRILR…SHNETFNLNP (664 aa)) lie on the Extracellular side of the membrane. 4 consecutive Ig-like C2-type domains span residues 28 to 123 (PGVR…ARLE), 134 to 215 (EGFK…VRLA), 234 to 321 (PHLL…SIQL), and 327 to 414 (PRIV…LQVN). Disulfide bonds link Cys-51–Cys-106, Cys-155–Cys-203, and Cys-257–Cys-305. N-linked (GlcNAc...) asparagine glycans are attached at residues Asn-80, Asn-185, Asn-192, Asn-281, Asn-336, Asn-365, Asn-369, and Asn-455. Cys-348 and Cys-396 form a disulfide bridge. 2 consecutive Fibronectin type-III domains span residues 450 to 557 (PPSA…LQRG) and 565 to 660 (VPSL…TQRP). Positions 486 and 493 each coordinate heparin. Asn-516 carries N-linked (GlcNAc...) asparagine glycosylation. Arg-531 contacts heparin. Residue Asn-547 is glycosylated (N-linked (GlcNAc...) asparagine). The segment covering 655 to 667 (GRTQRPRVSTTTE) has biased composition (polar residues). The tract at residues 655 to 679 (GRTQRPRVSTTTEPAVHAMDTTTPS) is disordered. An N-linked (GlcNAc...) asparagine glycan is attached at Asn-681. Residues 689-709 (LLTGTIGGGALLVLLVVSACL) form a helical membrane-spanning segment. Topologically, residues 710–888 (CLCRRRSSRG…SSGSLNSVGV (179 aa)) are cytoplasmic. Disordered regions lie at residues 759–789 (AQQQ…DMSY), 812–864 (SSSL…PGRV), and 869–888 (ARLS…SVGV). A compositionally biased stretch (low complexity) spans 760-775 (QQQQQQQQQQQQQQQQ). Positions 843–859 (QPTDGSTADSPRLQASN) are enriched in polar residues. Over residues 872-888 (SSRSENLSSGSLNSVGV) the composition is skewed to low complexity.

Belongs to the immunoglobulin superfamily. IHOG family. As to quaternary structure, homodimer. Heterotetramer; 2 iHog chains bind 2 hh chains when facilitated by heparin, heparin is required to promote high-affinity interactions between hh and iHog.

It localises to the membrane. Functionally, mediates response to the active Hedgehog (Hh) protein signal in embryos, functioning upstream or at the level of patched (ptc). The sequence is that of Interference hedgehog from Drosophila grimshawi (Hawaiian fruit fly).